The sequence spans 396 residues: S-adenosylmethionine synthase (396 aa).

Residue His-16 participates in ATP binding. Residue Asp-18 participates in Mg(2+) binding. Glu-44 is a K(+) binding site. 2 residues coordinate L-methionine: Glu-57 and Gln-100. The tract at residues 100 to 110 is flexible loop; that stretch reads QSVDINQGVDR. Residues 165–167, 231–232, Asp-240, 246–247, Ala-263, and Lys-267 each bind ATP; these read DAK, KF, and RK. Asp-240 lines the L-methionine pocket. An L-methionine-binding site is contributed by Lys-271.

The protein belongs to the AdoMet synthase family. In terms of assembly, homotetramer; dimer of dimers. Mg(2+) serves as cofactor. K(+) is required as a cofactor.

It is found in the cytoplasm. The enzyme catalyses L-methionine + ATP + H2O = S-adenosyl-L-methionine + phosphate + diphosphate. It functions in the pathway amino-acid biosynthesis; S-adenosyl-L-methionine biosynthesis; S-adenosyl-L-methionine from L-methionine: step 1/1. Functionally, catalyzes the formation of S-adenosylmethionine (AdoMet) from methionine and ATP. The overall synthetic reaction is composed of two sequential steps, AdoMet formation and the subsequent tripolyphosphate hydrolysis which occurs prior to release of AdoMet from the enzyme. The chain is S-adenosylmethionine synthase from Azotobacter vinelandii (strain DJ / ATCC BAA-1303).